Consider the following 95-residue polypeptide: Large ribosomal subunit protein uL23 (95 aa).

The protein belongs to the universal ribosomal protein uL23 family. In terms of assembly, part of the 50S ribosomal subunit. Contacts protein L29, and trigger factor when it is bound to the ribosome.

In terms of biological role, one of the early assembly proteins it binds 23S rRNA. One of the proteins that surrounds the polypeptide exit tunnel on the outside of the ribosome. Forms the main docking site for trigger factor binding to the ribosome. This Solibacter usitatus (strain Ellin6076) protein is Large ribosomal subunit protein uL23.